The following is a 36-amino-acid chain: Cytochrome b6-f complex subunit 7 (36 aa).

Topologically, residues 1–5 (NAAAE) are lumenal. Residues 6-28 (IFRIAAVMNGLTLVGVAIGFVLL) form a helical membrane-spanning segment. At 29 to 36 (RIEATVEE) the chain is on the stromal side.

The protein belongs to the PetM family. As to quaternary structure, the 4 large subunits of the cytochrome b6-f complex are cytochrome b6, subunit IV (17 kDa polypeptide, PetD), cytochrome f and the Rieske protein, while the 4 small subunits are PetG, PetL, PetM and PetN. The complex functions as a dimer.

It is found in the plastid. It localises to the chloroplast thylakoid membrane. In terms of biological role, component of the cytochrome b6-f complex, which mediates electron transfer between photosystem II (PSII) and photosystem I (PSI), cyclic electron flow around PSI, and state transitions. The polypeptide is Cytochrome b6-f complex subunit 7 (Spinacia oleracea (Spinach)).